The chain runs to 260 residues: RNA polymerase sigma-G factor (260 aa).

The segment at 1-71 (MSRNKVEICG…GEYVDDLFQV (71 aa)) is recognizes anti-sigma-G factor Gin (csfB). Positions 67–80 (DLFQVGCIGLMKSI) match the Polymerase core binding motif. Residues 229–248 (QMEVAEEIGISQAQVSRLEK) constitute a DNA-binding region (H-T-H motif).

The protein belongs to the sigma-70 factor family. As to quaternary structure, interacts with anti-sigma-G factor Gin (csfB).

With respect to regulation, activity repressed by anti-sigma-G factor Gin (csfB) and Lon protease during the early stages of forespore development. When both Gin and sigma-G are expressed in E.coli Gin inhibits sigma-G activity, strongly suggesting Gin inhibits by direct physical interaction. In terms of biological role, sigma factors are initiation factors that promote the attachment of RNA polymerase to specific initiation sites and are then released. This sigma factor is responsible for the expression of sporulation specific genes in the forespore. The protein is RNA polymerase sigma-G factor (sigG) of Bacillus subtilis (strain 168).